Consider the following 430-residue polypeptide: MSWVQATLLARGLCRAWGGICRAALPGTSISQVPRQLPRGLHCSAAPHSSEQSLVSSPPEPRQRPTKALVPYEDLFGQAPSGERDKASFLQAVQKFGEHSVRKRGHIDFIYLALRKMREYGVERDLAVYNQLLDIFPKEVFRPRNVIQRIFVHYPRQQECGIAVLEQMESHGVMPNKETEFLLIQIFGRKSYPMLKLLRLKMWFPRFMNINPFPVPRDLSQDPVELATFGLRHMEPDLSARVTIYQVPLPKDSTGAADPPQPHIVGIQSPDQQAALARHNPARPIFVEGPFSLWLRNKCVYYHILRADLLPPEEREVEETPEEWNLYYPMQLDLEYSRSGWDDYEFDINEVEEGPVFAMCMAGAHDQATLAKWIQGLQETNPTLAQIPVVFRLTRATGELHTSSAGLEEPPPPEDHEEDDSRQRQQQGQS.

The transit peptide at 1 to 48 (MSWVQATLLARGLCRAWGGICRAALPGTSISQVPRQLPRGLHCSAAPH) directs the protein to the mitochondrion. Positions 41–66 (LHCSAAPHSSEQSLVSSPPEPRQRPT) are disordered. Positions 47–56 (PHSSEQSLVS) are enriched in polar residues. Lys372 is covalently cross-linked (Glycyl lysine isopeptide (Lys-Gly) (interchain with G-Cter in ubiquitin)). The interval 400-430 (LHTSSAGLEEPPPPEDHEEDDSRQRQQQGQS) is disordered. Residues 411–420 (PPPEDHEEDD) show a composition bias toward acidic residues.

The protein belongs to the ECSIT family. Interacts with MAP3K1, SMAD4 and TRAF6. Interacts with SMAD1 only after BMP4-treatment. Part of the mitochondrial complex I assembly/MCIA complex that comprises at least the core subunits TMEM126B, NDUFAF1, ECSIT and ACAD9 and complement subunits such as COA1 and TMEM186. Interacts with NDUFAF1. Interacts with ACAD9. Interacts with TRIM59. Interacts with TMEM70 and TMEM242. Interacts (when ubiquitinated) with NF-kappa-B subunits RELA and NFKB1. Interacts with RIGI, IFIT1 and MAVS; these interactions promote RLR-mediated type I IFN induction. Interacts with SQSTM1; this interaction inhibits TLR4 signaling via functional regulation of the TRAF6-ECSIT complex. Interacts with cereblon/CRBN; this interaction inhibits the ubiquitination of ECSIT. In terms of processing, ubiquitinated on Lys-372; leading to translocation in the nucleus together with RELA and NFKB1 and expression of NF-kappa-B-dependent genes.

Its subcellular location is the cytoplasm. The protein resides in the nucleus. It localises to the mitochondrion. In terms of biological role, adapter protein that plays a role in different signaling pathways including TLRs and IL-1 pathways or innate antiviral induction signaling. Plays a role in the activation of NF-kappa-B by forming a signal complex with TRAF6 and TAK1/MAP3K7 to activate TAK1/MAP3K7 leading to activation of IKKs. Once ubiquitinated, interacts with the dissociated RELA and NFKB1 proteins and translocates to the nucleus where it induces NF-kappa-B-dependent gene expression. Plays a role in innate antiviral immune response by bridging the pattern recognition receptors RIGI and MDA5/IFIT1 to the MAVS complex at the mitochondrion. Promotes proteolytic activation of MAP3K1. Involved in the BMP signaling pathway. Required for normal embryonic development. As part of the MCIA complex, involved in the assembly of the mitochondrial complex I. The sequence is that of Evolutionarily conserved signaling intermediate in Toll pathway, mitochondrial from Macaca fascicularis (Crab-eating macaque).